Consider the following 700-residue polypeptide: DNA topoisomerase 1 (700 aa).

Residues 3 to 114 enclose the Toprim domain; that stretch reads KNLIIVESPA…TLPRIVFHEI (112 aa). The Mg(2+) site is built by Glu9 and Asp83. The 424-residue stretch at 130–553 folds into the Topo IA-type catalytic domain; the sequence is NMHSVNAQQT…EFYYPFMRKI (424 aa). Positions 164–169 are interaction with DNA; it reads SAGRVQ. Residue Tyr298 is the O-(5'-phospho-DNA)-tyrosine intermediate of the active site. 3 C4-type zinc fingers span residues 573-599, 629-656, and 669-692; these read CPDC…FPKC, CPSC…YPKC, and CEEC…CLKC.

Belongs to the type IA topoisomerase family. Monomer. Mg(2+) is required as a cofactor.

The enzyme catalyses ATP-independent breakage of single-stranded DNA, followed by passage and rejoining.. Its function is as follows. Releases the supercoiling and torsional tension of DNA, which is introduced during the DNA replication and transcription, by transiently cleaving and rejoining one strand of the DNA duplex. Introduces a single-strand break via transesterification at a target site in duplex DNA. The scissile phosphodiester is attacked by the catalytic tyrosine of the enzyme, resulting in the formation of a DNA-(5'-phosphotyrosyl)-enzyme intermediate and the expulsion of a 3'-OH DNA strand. The free DNA strand then undergoes passage around the unbroken strand, thus removing DNA supercoils. Finally, in the religation step, the DNA 3'-OH attacks the covalent intermediate to expel the active-site tyrosine and restore the DNA phosphodiester backbone. In Campylobacter jejuni subsp. jejuni serotype O:2 (strain ATCC 700819 / NCTC 11168), this protein is DNA topoisomerase 1.